The primary structure comprises 300 residues: MDQQSTRTDITVNVDGFWMLQALLDIRHVAPELRCRPYVSTDSNDWLNEHPGMAVMREQGIVVGDTVNEQVAARMRVLAAPDLEVVALLSRGKLLYGVVDNEDQPPGSRDIPDNEFRVVLARRGQHWVSAVRVGNDITVDDVSVSDSASIAALVIDGLESIHHADPAAINAVNVPLEEMLEATKSWQESGFNVFSGGDLRRMGISASTVAALGQALSDPAAEVAVYARQYRDDAKGPSASVLSLKDGSGGRIALYQQARTAGSGEAWLAICPATPQLVQVGVKTVLDTLPYGEWKTHSRV.

It belongs to the EspG family. As to quaternary structure, interacts specifically with ESX-5-dependent PE/PPE proteins. Binds PPE33 and PPE18. Does not interact with EsxN. Monomer in solution.

The protein resides in the cytoplasm. Its function is as follows. Specific chaperone for cognate PE/PPE proteins. Plays an important role in preventing aggregation of PE/PPE dimers. Required for LipY and PE31/PPE18 secretion. The chain is ESX-5 secretion-associated protein EspG5 from Mycobacterium marinum (strain ATCC BAA-535 / M).